The following is a 187-amino-acid chain: Pyridoxal 5'-phosphate synthase subunit PdxT (187 aa).

47-49 (GES) serves as a coordination point for L-glutamine. C76 serves as the catalytic Nucleophile. Residues R102 and 128–129 (IR) each bind L-glutamine. Active-site charge relay system residues include H165 and E167.

It belongs to the glutaminase PdxT/SNO family. In terms of assembly, in the presence of PdxS, forms a dodecamer of heterodimers. Only shows activity in the heterodimer.

It catalyses the reaction aldehydo-D-ribose 5-phosphate + D-glyceraldehyde 3-phosphate + L-glutamine = pyridoxal 5'-phosphate + L-glutamate + phosphate + 3 H2O + H(+). It carries out the reaction L-glutamine + H2O = L-glutamate + NH4(+). The protein operates within cofactor biosynthesis; pyridoxal 5'-phosphate biosynthesis. Functionally, catalyzes the hydrolysis of glutamine to glutamate and ammonia as part of the biosynthesis of pyridoxal 5'-phosphate. The resulting ammonia molecule is channeled to the active site of PdxS. The polypeptide is Pyridoxal 5'-phosphate synthase subunit PdxT (Methanococcus maripaludis (strain C5 / ATCC BAA-1333)).